We begin with the raw amino-acid sequence, 436 residues long: Acetylcholine receptor non-alpha chain (436 aa).

Residues 1–195 (IIDVHEIDQI…IFYLELRRKP (195 aa)) are Extracellular-facing. A glycan (N-linked (GlcNAc...) asparagine) is linked at asparagine 62. A disulfide bridge links cysteine 89 with cysteine 103. N-linked (GlcNAc...) asparagine glycosylation occurs at asparagine 140. 3 helical membrane passes run 196–219 (LFYT…AFYL), 227–245 (VTLC…LLLK), and 261–280 (YLLF…VISL). Residues 281–404 (NLHFRRPSTH…WKFVARVLDR (124 aa)) lie on the Cytoplasmic side of the membrane. A helical transmembrane segment spans residues 405–423 (LFLLLFSIACFLGTILILF).

Belongs to the ligand-gated ion channel (TC 1.A.9) family. Acetylcholine receptor (TC 1.A.9.1) subfamily.

The protein resides in the postsynaptic cell membrane. It is found in the cell membrane. Its function is as follows. After binding acetylcholine, the AChR responds by an extensive change in conformation that affects all subunits and leads to opening of an ion-conducting channel across the plasma membrane. The sequence is that of Acetylcholine receptor non-alpha chain from Onchocerca volvulus.